A 406-amino-acid polypeptide reads, in one-letter code: uncharacterized protein (406 aa).

It belongs to the mycobacterial PPE family.

This is an uncharacterized protein from Mycobacterium tuberculosis (strain CDC 1551 / Oshkosh).